The chain runs to 377 residues: Chaperone protein DnaJ (377 aa).

One can recognise a J domain in the interval 5–70 (DYYQVLGVSR…KKRSAYDQLG (66 aa)). A CR-type zinc finger spans residues 138 to 216 (GVTKIISFKT…CYGEGRYINT (79 aa)). Zn(2+)-binding residues include C151, C154, C168, C171, C190, C193, C204, and C207. CXXCXGXG motif repeat units follow at residues 151–158 (CEACTGKG), 168–175 (CPTCRGSG), 190–197 (CQTCRGAG), and 204–211 (CTKCYGEG).

The protein belongs to the DnaJ family. As to quaternary structure, homodimer. Requires Zn(2+) as cofactor.

It localises to the cytoplasm. Functionally, participates actively in the response to hyperosmotic and heat shock by preventing the aggregation of stress-denatured proteins and by disaggregating proteins, also in an autonomous, DnaK-independent fashion. Unfolded proteins bind initially to DnaJ; upon interaction with the DnaJ-bound protein, DnaK hydrolyzes its bound ATP, resulting in the formation of a stable complex. GrpE releases ADP from DnaK; ATP binding to DnaK triggers the release of the substrate protein, thus completing the reaction cycle. Several rounds of ATP-dependent interactions between DnaJ, DnaK and GrpE are required for fully efficient folding. Also involved, together with DnaK and GrpE, in the DNA replication of plasmids through activation of initiation proteins. This is Chaperone protein DnaJ from Orientia tsutsugamushi (strain Ikeda) (Rickettsia tsutsugamushi).